The following is a 417-amino-acid chain: Protein translocase subunit SecD (417 aa).

The next 6 helical transmembrane spans lie at 9-29, 236-256, 258-278, 288-308, 333-353, and 360-380; these read LLVS…PLVS, ASMK…LLYY, LSGL…LAVM, PGMA…VLIF, FTTI…LFYL, and GFAV…VTVT.

This sequence belongs to the SecD/SecF family. SecD subfamily. As to quaternary structure, forms a complex with SecF. Part of the essential Sec protein translocation apparatus which comprises SecA, SecYEG and auxiliary proteins SecDF. Other proteins may also be involved.

The protein resides in the cell membrane. In terms of biological role, part of the Sec protein translocase complex. Interacts with the SecYEG preprotein conducting channel. SecDF uses the proton motive force (PMF) to complete protein translocation after the ATP-dependent function of SecA. In Acidaminococcus fermentans (strain ATCC 25085 / DSM 20731 / CCUG 9996 / CIP 106432 / VR4), this protein is Protein translocase subunit SecD.